The primary structure comprises 260 residues: ProSAAS (260 aa).

An N-terminal signal peptide occupies residues 1-33 (MAGSPLLCGPRAGGVGLLVLLLLGLLRLPPTLS). The segment at 34-215 (ARPVKEPRSL…SSEPEAAPAP (182 aa)) is proSAAS(1-180). Disordered stretches follow at residues 162 to 187 (AALRPRPPVYDDGPTGPDVEDAADET) and 206 to 234 (SSEPEAAPAPRRLRRAVDQDLGPEVPPEN). The C-terminal inhibitory domain; interacts with PCSK1 stretch occupies residues 221-260 (AVDQDLGPEVPPENVLGALLRVKRLENSSPQAPARRLLPP). The short motif at 239 to 244 (LLRVKR) is the Sufficient for inhibition of PCSK1 element.

In terms of assembly, interacts via the C-terminal inhibitory domain with PCSK1 65 kDa form. In terms of processing, proteolytically cleaved in the Golgi. Big SAAS, Little SAAS, PEN and Big LEN are the major processed peptides in proSAAS-overexpressing PC-12 phaeochromocytoma cells (lacking PCSK1 and PCSK2 endopeptidases). Peptides corresponding to PEN and a proSAAS aa 40-59 have been detected in wild-type PC-12 cells. As to expression, expressed in adult brain (all major structural regions), adrenal gland (medulla) and spinal cord (dorsal and ventral horn). Expressed in pancreatic islands.

It localises to the secreted. The protein localises to the golgi apparatus. The protein resides in the trans-Golgi network. Functionally, may function in the control of the neuroendocrine secretory pathway. Proposed be a specific endogenous inhibitor of PCSK1. ProSAAS and Big PEN-LEN, both containing the C-terminal inhibitory domain, but not the processed peptides reduce PCSK1 activity in the endoplasmic reticulum and Golgi. It reduces the activity of the 87 kDa form but not the autocatalytically derived 65 kDa form of PCSK1. Subsequent processing of proSAAS may eliminate the inhibition. Slows down convertase-mediated processing of proopiomelanocortin and proenkephalin. May control the intracellular timing of PCSK1 rather than its total level of activity. Its function is as follows. Endogenous ligand for GPR171. Neuropeptide involved in the regulation of feeding. In Rattus norvegicus (Rat), this protein is ProSAAS (Pcsk1n).